The sequence spans 344 residues: GDSL esterase/lipase At2g19010 (344 aa).

The N-terminal stretch at 1–21 (MSKACWLVAAIIFTAATVVYG) is a signal peptide. Ser-33 functions as the Nucleophile in the catalytic mechanism. N-linked (GlcNAc...) asparagine glycosylation is present at Asn-303. Active-site residues include Asp-311 and His-314.

Belongs to the 'GDSL' lipolytic enzyme family.

The protein localises to the secreted. In Arabidopsis thaliana (Mouse-ear cress), this protein is GDSL esterase/lipase At2g19010.